The chain runs to 142 residues: Large ribosomal subunit protein uL13 (142 aa).

This sequence belongs to the universal ribosomal protein uL13 family. Part of the 50S ribosomal subunit.

Functionally, this protein is one of the early assembly proteins of the 50S ribosomal subunit, although it is not seen to bind rRNA by itself. It is important during the early stages of 50S assembly. The sequence is that of Large ribosomal subunit protein uL13 from Alkaliphilus metalliredigens (strain QYMF).